Consider the following 37-residue polypeptide: Large ribosomal subunit protein bL36 (37 aa).

Belongs to the bacterial ribosomal protein bL36 family.

This chain is Large ribosomal subunit protein bL36, found in Psychromonas ingrahamii (strain DSM 17664 / CCUG 51855 / 37).